The sequence spans 293 residues: Beta-lactamase (293 aa).

An N-terminal signal peptide occupies residues 1–27; the sequence is MRFTATVLSRVATGLALGLSMATASLA. Ser74 acts as the Acyl-ester intermediate in catalysis. A substrate-binding site is contributed by 238 to 240; that stretch reads KSG.

Belongs to the class-A beta-lactamase family.

The protein resides in the periplasm. The enzyme catalyses a beta-lactam + H2O = a substituted beta-amino acid. Hydrolyzes beta-lactams antibiotics. Rates of hydrolysis relative to benzylpenicillin =100: ampicillin = 27, carbenicillin = 25, cloxacillin = 0, cephaloridine = 4. This chain is Beta-lactamase, found in Rhodobacter capsulatus (Rhodopseudomonas capsulata).